Here is a 210-residue protein sequence, read N- to C-terminus: Thymidylate kinase (210 aa).

ATP is bound at residue 10 to 17 (GLEGAGKS).

The protein belongs to the thymidylate kinase family.

It carries out the reaction dTMP + ATP = dTDP + ADP. In terms of biological role, phosphorylation of dTMP to form dTDP in both de novo and salvage pathways of dTTP synthesis. This Haemophilus influenzae (strain ATCC 51907 / DSM 11121 / KW20 / Rd) protein is Thymidylate kinase (tmk).